We begin with the raw amino-acid sequence, 96 residues long: Co-chaperonin GroES (96 aa).

It belongs to the GroES chaperonin family. As to quaternary structure, heptamer of 7 subunits arranged in a ring. Interacts with the chaperonin GroEL.

Its subcellular location is the cytoplasm. Functionally, together with the chaperonin GroEL, plays an essential role in assisting protein folding. The GroEL-GroES system forms a nano-cage that allows encapsulation of the non-native substrate proteins and provides a physical environment optimized to promote and accelerate protein folding. GroES binds to the apical surface of the GroEL ring, thereby capping the opening of the GroEL channel. This Paracidovorax citrulli (strain AAC00-1) (Acidovorax citrulli) protein is Co-chaperonin GroES.